A 358-amino-acid chain; its full sequence is Porphobilinogen deaminase, chloroplastic (358 aa).

The first 24 residues, 1–24 (MPPPPRCAATTAHHSLLGSPTCLA), serve as a signal peptide directing secretion. An S-(dipyrrolylmethanemethyl)cysteine modification is found at cysteine 290.

This sequence belongs to the HMBS family. Requires dipyrromethane as cofactor.

It localises to the plastid. Its subcellular location is the chloroplast. The enzyme catalyses 4 porphobilinogen + H2O = hydroxymethylbilane + 4 NH4(+). Its pathway is porphyrin-containing compound metabolism; protoporphyrin-IX biosynthesis; coproporphyrinogen-III from 5-aminolevulinate: step 2/4. The protein operates within porphyrin-containing compound metabolism; chlorophyll biosynthesis. Its function is as follows. Tetrapolymerization of the monopyrrole PBG into the hydroxymethylbilane pre-uroporphyrinogen in several discrete steps. The chain is Porphobilinogen deaminase, chloroplastic (HEMC) from Oryza sativa subsp. japonica (Rice).